The primary structure comprises 750 residues: Photosystem I P700 chlorophyll a apoprotein A1 (750 aa).

8 helical membrane-spanning segments follow: residues 72–95 (VFSA…FHGA), 158–181 (LYST…FHYH), 197–221 (LNHH…HVSL), 293–311 (TAHH…GHMY), 348–371 (WHAQ…HHMY), 387–413 (LSIF…IFMV), 435–457 (AIIS…LYIH), and 532–550 (FLVH…LILL). The [4Fe-4S] cluster site is built by Cys-574 and Cys-583. A run of 2 helical transmembrane segments spans residues 590–611 (HVFL…HFSW) and 664–686 (LSAY…MFLF). Residue His-675 coordinates chlorophyll a'. Positions 683 and 691 each coordinate chlorophyll a. Position 692 (Trp-692) interacts with phylloquinone. Residues 724–744 (AVGVAHYLLGGIATTWAFFLA) form a helical membrane-spanning segment.

Belongs to the PsaA/PsaB family. As to quaternary structure, the PsaA/B heterodimer binds the P700 chlorophyll special pair and subsequent electron acceptors. PSI consists of a core antenna complex that captures photons, and an electron transfer chain that converts photonic excitation into a charge separation. The eukaryotic PSI reaction center is composed of at least 11 subunits. P700 is a chlorophyll a/chlorophyll a' dimer, A0 is one or more chlorophyll a, A1 is one or both phylloquinones and FX is a shared 4Fe-4S iron-sulfur center. is required as a cofactor.

The protein resides in the plastid. The protein localises to the chloroplast thylakoid membrane. The enzyme catalyses reduced [plastocyanin] + hnu + oxidized [2Fe-2S]-[ferredoxin] = oxidized [plastocyanin] + reduced [2Fe-2S]-[ferredoxin]. Functionally, psaA and PsaB bind P700, the primary electron donor of photosystem I (PSI), as well as the electron acceptors A0, A1 and FX. PSI is a plastocyanin-ferredoxin oxidoreductase, converting photonic excitation into a charge separation, which transfers an electron from the donor P700 chlorophyll pair to the spectroscopically characterized acceptors A0, A1, FX, FA and FB in turn. Oxidized P700 is reduced on the lumenal side of the thylakoid membrane by plastocyanin. This is Photosystem I P700 chlorophyll a apoprotein A1 from Chlorokybus atmophyticus (Soil alga).